We begin with the raw amino-acid sequence, 379 residues long: Type II methyltransferase M.SsoII (379 aa).

Residues Ile9 to Asn66 form the HTH cro/C1-type domain. Residues Tyr72 to Ser379 enclose the SAM-dependent MTase C5-type domain. Residue Cys142 is part of the active site.

This sequence belongs to the class I-like SAM-binding methyltransferase superfamily. C5-methyltransferase family.

The enzyme catalyses a 2'-deoxycytidine in DNA + S-adenosyl-L-methionine = a 5-methyl-2'-deoxycytidine in DNA + S-adenosyl-L-homocysteine + H(+). Functionally, a methylase that recognizes the double-stranded sequence 5'-CCNGG-3', methylates C-2 on both strands, and protects the DNA from cleavage by the SsoII endonuclease. The chain is Type II methyltransferase M.SsoII (ssoIIM) from Shigella sonnei.